We begin with the raw amino-acid sequence, 408 residues long: Argininosuccinate synthase (408 aa).

8-16 provides a ligand contact to ATP; sequence AYSGGLDTS. Tyr-86 contributes to the L-citrulline binding site. ATP is bound at residue Gly-116. Positions 118, 122, and 123 each coordinate L-aspartate. L-citrulline is bound at residue Asn-122. L-citrulline contacts are provided by Arg-126, Ser-174, Glu-259, and Tyr-271.

It belongs to the argininosuccinate synthase family. Type 1 subfamily. In terms of assembly, homotetramer.

Its subcellular location is the cytoplasm. It carries out the reaction L-citrulline + L-aspartate + ATP = 2-(N(omega)-L-arginino)succinate + AMP + diphosphate + H(+). The protein operates within amino-acid biosynthesis; L-arginine biosynthesis; L-arginine from L-ornithine and carbamoyl phosphate: step 2/3. The protein is Argininosuccinate synthase of Leuconostoc mesenteroides subsp. mesenteroides (strain ATCC 8293 / DSM 20343 / BCRC 11652 / CCM 1803 / JCM 6124 / NCDO 523 / NBRC 100496 / NCIMB 8023 / NCTC 12954 / NRRL B-1118 / 37Y).